Here is a 246-residue protein sequence, read N- to C-terminus: YjeF N-terminal domain-containing 3 (246 aa).

Residues 24 to 234 (VATVETELLR…DIQKKYELNL (211 aa)) enclose the YjeF N-terminal domain.

As to quaternary structure, interacts with apoa1a. Binds to high-density lipoprotein.

Accelerates cholesterol efflux from endothelial cells to high-density lipoprotein (HDL) and thereby regulates angiogenesis. Orchestrates hematopoietic stem and progenitor cell emergence from the hemogenic endothelium, a type of specialized endothelium manifesting hematopoietic potential. YJEFN3-mediated cholesterol efflux activates endothelial SREBF2, the master transcription factor for cholesterol biosynthesis, which in turn transactivates NOTCH and promotes hematopoietic stem and progenitor cell emergence. In Danio rerio (Zebrafish), this protein is YjeF N-terminal domain-containing 3.